The chain runs to 1181 residues: Poly [ADP-ribose] polymerase tankyrase (1181 aa).

ANK repeat units follow at residues 56–85 (RKSTPLHFAAGYGRREVVEFLLNSGASIQA), 89–118 (GGLHPLHNCCSFGHAEVVRLLLKAGASPNT), 122–151 (WNYTPLHEAASKGKVDVCLALLQHGANHTI), 209–238 (RRSTPLHLAAGYNRIGIVEILLANGADVHA), 242–271 (GGLVPLHNACSYGHFDVTKLLIQAGANVNA), 275–304 (WAFTPLHEAASKSRVEVCSLLLSRGADPTL), 362–394 (TGDTPLHLAVVSPDGKRKQLMELLTRKGSLLNE), 398–427 (AFLTPLHLAAELLHYDAMEVLLKQGAKVNA), 431–458 (LGQTPLHRCARDEQAVRLLLSYAADTNI), 483–513 (DSETHLLEAAKAGDLDTVRRIVLNNPISVNC), 519–548 (RHSTPLHFAAGFNRVPVVQFLLEHGAEVYA), 552–581 (GGLVPLHNACSYGHYEVTELLVKHGANVNV), 585–614 (WKFTPLHEAAAKGKYDICKLLLKHGADPMK), 638–668 (RGPSALLDAAKKGNLARVQRLVTPESINCRD), 672–701 (RNSTPLHLAAGYNNFECAEYLLENGADVNA), 705–734 (GGLIPLHNASSYGHLDIAALLIKHKTVVNA), 738–767 (WGFTPLHEAAQKGRTQLCSLLLAHGADAYM), and 771–799 (EGQTPIELATADDVKCLLQDAMATSLSQQ). Disordered regions lie at residues 807–834 (SLTSSSPAPDATAAAAPGTSSSSSSAIL) and 864–886 (RISPAQGAEANGAEGSSSDDLLP). Residues 889-952 (DTITNVSGFL…LKGIAQLRST (64 aa)) form the SAM domain. The PARP catalytic domain maps to 969–1174 (LPDDKEFVAV…YQIVKPDDSS (206 aa)). The Zn(2+) site is built by Cys-1091, His-1094, Cys-1099, and Cys-1102.

This sequence belongs to the ARTD/PARP family. As to quaternary structure, interacts (via ANK repeats) with PI31.

The catalysed reaction is NAD(+) + (ADP-D-ribosyl)n-acceptor = nicotinamide + (ADP-D-ribosyl)n+1-acceptor + H(+).. It carries out the reaction L-aspartyl-[protein] + NAD(+) = 4-O-(ADP-D-ribosyl)-L-aspartyl-[protein] + nicotinamide. It catalyses the reaction L-glutamyl-[protein] + NAD(+) = 5-O-(ADP-D-ribosyl)-L-glutamyl-[protein] + nicotinamide. Functionally, stimulates proteasome activity, probably by ADP-ribosylation of PI31. Modulates 26S proteasome assembly. The polypeptide is Poly [ADP-ribose] polymerase tankyrase (Drosophila melanogaster (Fruit fly)).